We begin with the raw amino-acid sequence, 585 residues long: MDVMKLDHDSVLKELERITSKAAEVQDNILRGILERNKDTEYLSKYMNGSKDVLEFKRAVPIIIYKDIYPYIQRIANGEDSSLITGHSITEILCSSGTSAGEPKLMPTIPEDLDRRTFLYNLIIPIVNKYITGLDKGKAMYLNFVKAETSTPCGLPIRAVLTSYYKSKHFQCRPYDPFNDLTSPIQTILCEDSNQSMYCQLLAGLIHRHKVMRLGAVFASAFLRAISYLEKKWSQLCEDIRTGSLNPMITDPGCQMAMSCLLMSPNPELASEIEEICGRSSWKGILCQLWPKAKFIEAVVTGSMAQYIPALEFFSQGKIPLVCPMYASSETYFGVNVEPLSKPSDVVFTLLPNMCYFEFIPLGKNGTLSFDLDDDEQVPCDKVVDLVNVKLGRYYELVVTTFAGLYRYRIGDVLQVAGFYNGAPQFRFICRRNVVLSIDLDKTNEEDLHRSITLAKKKLGSNAFLAEYTSYADTSSVPGHYVLFWEIQGHLEPKLMEECCVAVEEELDYIYRQCRTKERSIGALEIRVVKPGTFEKLMDLIISQGGSFNQYKTPRCVKSNSATFKLLNGHVMASFFSPRDPTWVP.

This sequence belongs to the IAA-amido conjugating enzyme family.

Its function is as follows. Catalyzes the synthesis of indole-3-acetic acid (IAA)-amino acid conjugates, providing a mechanism for the plant to cope with the presence of excess auxin. The polypeptide is Putative indole-3-acetic acid-amido synthetase GH3.9 (GH3.9) (Arabidopsis thaliana (Mouse-ear cress)).